The chain runs to 613 residues: Ribosome-associated molecular chaperone SSB (613 aa).

The nucleotide binding domain (NBD) stretch occupies residues 1–391 (MADGVFQGAI…ILTGQSTSDE (391 aa)). ATP-binding positions include 16-18 (TTY), Lys-73, 205-207 (GGT), 271-278 (ERAKRTLS), and Gly-342. Residues 392-402 (TKDLLLLDVAP) are inter-domain linker. The interval 403 to 613 (LSLGVGMQGD…RVVTKAMSSR (211 aa)) is substrate binding domain (SBD). The segment at 516-612 (SEDIEKMVNQ…KRVVTKAMSS (97 aa)) is lid domain (SBDalpha). Positions 574 to 582 (IEAALADAL) match the Nuclear export signal motif.

This sequence belongs to the heat shock protein 70 family. Ssb-type Hsp70 subfamily. In terms of assembly, binds to ribosomes. Binds close to the ribosomal tunnel exit via contacts with both ribosomal proteins and rRNA. Directly interacts with nascent polypeptides. This interaction is dependent on the ribosome-associated complex (RAC). Interacts with SSE1. Interacts with FES1.

It localises to the cytoplasm. The enzyme catalyses ATP + H2O = ADP + phosphate + H(+). Functionally, ribosome-bound, Hsp70-type chaperone that assists in the cotranslational folding of newly synthesized proteins in the cytosol. Stimulates folding by interacting with nascent chains, binding to short, largely hydrophobic sequences exposed by unfolded proteins, thereby stabilizing longer, more slowly translated, and aggregation-prone nascent polypeptides and domains that cannot fold stably until fully synthesized. The Hsp70-protein substrate interaction depends on ATP-binding and on allosteric regulation between the NBD and the SBD. The ATP-bound state is characterized by a fast exchange rate of substrate (low affinity state), while in the ADP-bound state exchange is much slower (high affinity state). During the Hsp70 cycle, the chaperone switches between the ATP-bound state (open conformation) and the ADP-bound state (closed conformation) by major conformational rearrangements involving mainly the lid domain. Ssb cooperates with a specific Hsp40/Hsp70 co-chaperone termed the ribosome-associated complex (RAC), which stimulates the ATPase activity of the ribosome-associated pool of Ssbs and switches it to the high affinity substrate binding state. Hsp110 chaperone SSE1 and FES1 act as nucleotide exchange factors that cause substrate release. The sequence is that of Ribosome-associated molecular chaperone SSB (SSB1) from Candida glabrata (strain ATCC 2001 / BCRC 20586 / JCM 3761 / NBRC 0622 / NRRL Y-65 / CBS 138) (Yeast).